A 130-amino-acid chain; its full sequence is Lysozyme C (130 aa).

The C-type lysozyme domain maps to 1–130 (KTYERCELAR…VSPWIRDCGL (130 aa)). Cystine bridges form between C6-C128, C30-C116, C65-C81, and C77-C95. Residues E35 and D53 contribute to the active site.

This sequence belongs to the glycosyl hydrolase 22 family. Monomer.

Its subcellular location is the secreted. The catalysed reaction is Hydrolysis of (1-&gt;4)-beta-linkages between N-acetylmuramic acid and N-acetyl-D-glucosamine residues in a peptidoglycan and between N-acetyl-D-glucosamine residues in chitodextrins.. In terms of biological role, lysozymes have primarily a bacteriolytic function; those in tissues and body fluids are associated with the monocyte-macrophage system and enhance the activity of immunoagents. This is Lysozyme C (LYZ) from Chelonia mydas (Green sea-turtle).